Consider the following 392-residue polypeptide: V-type proton ATPase subunit C (392 aa).

Ala-2 carries the post-translational modification N-acetylalanine.

It belongs to the V-ATPase C subunit family. V-ATPase is a heteromultimeric enzyme composed of a peripheral catalytic V1 complex (components A to H) attached to an integral membrane V0 proton pore complex (components: a, c, c', c'', d, e, f and VOA1). Interacts directly with VMA4.

It localises to the vacuole membrane. Functionally, subunit of the V1 complex of vacuolar(H+)-ATPase (V-ATPase), a multisubunit enzyme composed of a peripheral complex (V1) that hydrolyzes ATP and a membrane integral complex (V0) that translocates protons. V-ATPase is responsible for acidifying and maintaining the pH of intracellular compartments. Subunit C is necessary for the assembly of the catalytic sector of the enzyme and is likely to have a specific function in its catalytic activity. Reversibly leaves the enzyme after glucose depletion, causing the catalytic subcomplex V1 to detach from the V0 section. The sequence is that of V-type proton ATPase subunit C from Saccharomyces cerevisiae (strain ATCC 204508 / S288c) (Baker's yeast).